We begin with the raw amino-acid sequence, 453 residues long: MKMKRKLLSLVSVLTILLGAFWVTKIVKADQVTNYTNTASITKSDGTALSNDPSKAVNYWEPLSFSNSITFPDEVSIKAGDTLTIKLPEQLQFTTALTFDVMHTNGQLAGKATTDPNTGEVTVTFTDIFEKLPNDKAMTLNFNAQLNHNNISIPGVVNFNYNNVAYSSYVKDKDITPISPDVNKVGYQDKSNPGLIHWKVLINNKQGAIDNLTLTDVVGEDQEIVKDSLVAARLQYIAGDDVDSLDEAASRPYAEDFSKNVTYQTNDLGLTTGFTYTIPGSSNNAIFISYTTRLTSSQSAGKDVSNTIAISGNNINYSNQTGYARIESAYGRASSRVKRQAETTTVTETTTSSSSETTTSEATTETSSTTNNNSTTTETATSTTGASTTQTKTTASQTNVPTTTNITTTSKQVTKQKAKFVLPSTGEQAGLLLTTVGLVIVAVAGVYFYRTRR.

Residues 1-29 (MKMKRKLLSLVSVLTILLGAFWVTKIVKA) form the signal peptide. The disordered stretch occupies residues 331–403 (GRASSRVKRQ…TASQTNVPTT (73 aa)). A compositionally biased stretch (low complexity) spans 342–403 (ETTTVTETTT…TASQTNVPTT (62 aa)). The LPXTG sorting signal motif lies at 422 to 426 (LPSTG). Residue T425 is modified to Pentaglycyl murein peptidoglycan amidated threonine. Positions 426-453 (GEQAGLLLTTVGLVIVAVAGVYFYRTRR) are cleaved as a propeptide — removed by sortase.

It localises to the secreted. It is found in the cell wall. This is Wall-associated protein (wapA) from Streptococcus mutans serotype c (strain ATCC 700610 / UA159).